The primary structure comprises 102 residues: Omega-hexatoxin-Hi2b (102 aa).

The first 23 residues, Met-1–Gly-23, serve as a signal peptide directing secretion. Residues Lys-24–Arg-56 constitute a propeptide that is removed on maturation. 3 cysteine pairs are disulfide-bonded: Cys-61–Cys-75, Cys-68–Cys-81, and Cys-74–Cys-86. Leu-98 is modified (leucine amide). Residues Arg-100–Leu-102 constitute a propeptide that is removed on maturation.

Belongs to the neurotoxin 15 family. 02 (omega-actx) subfamily. As to expression, expressed by the venom gland.

Its subcellular location is the secreted. Functionally, potent inhibitor of insect, but not mammalian, voltage-gated calcium channels (Cav). The polypeptide is Omega-hexatoxin-Hi2b (Hadronyche infensa (Fraser island funnel-web spider)).